The following is a 472-amino-acid chain: Violaxanthin de-epoxidase, chloroplastic (472 aa).

Cystine bridges form between C133/C151, C138/C145, C157/C174, C161/C170, C189/C196, and C242/C372. The stretch at V379–F462 forms a coiled coil.

The protein belongs to the calycin superfamily. Lipocalin family. Post-translationally, disulfide bonds. Reduction of the disulfides results in loss of a rigid structure, a decrease in thermal stability of 15 degrees Celsius and a loss of activity.

It is found in the plastid. It localises to the chloroplast thylakoid membrane. The enzyme catalyses all-trans-violaxanthin + 2 L-ascorbate = all-trans-zeaxanthin + 2 L-dehydroascorbate + 2 H2O. With respect to regulation, irreversibly inhibited by DTT and iodoacetamide at pH 5.7 or pH 5.2, but not at pH 7.2. Regulated through Ca(2+) gating of H(+) flux at the CFoH(+) channel. Requires the presence of lipids forming reverse hexagonal structures such as monogalactosyldiacylglyceride (MGDG) or phosphatidylethanolamine. A negative curvature elastic stress in the thylakoid lipid bilayer is required for VDE1 activity. Part of the xanthophyll (or violaxanthin) cycle for controlling the concentration of zeaxanthin in chloroplasts. Catalyzes the two-step mono de-epoxidation reaction. Stereospecific for all-trans xanthophylls. Zeaxanthin induces the dissipation of excitation energy in the chlorophyll of the light-harvesting protein complex of photosystem II. The chain is Violaxanthin de-epoxidase, chloroplastic from Spinacia oleracea (Spinach).